Reading from the N-terminus, the 104-residue chain is Large ribosomal subunit protein uL24 (104 aa).

This sequence belongs to the universal ribosomal protein uL24 family. Part of the 50S ribosomal subunit. A methylated and unmethylated form are thought to exist.

One of two assembly initiator proteins, it binds directly to the 5'-end of the 23S rRNA, where it nucleates assembly of the 50S subunit. In terms of biological role, one of the proteins that surrounds the polypeptide exit tunnel on the outside of the subunit. The sequence is that of Large ribosomal subunit protein uL24 from Rhodopseudomonas palustris (strain ATCC BAA-98 / CGA009).